Consider the following 342-residue polypeptide: GTPase Obg (342 aa).

The Obg domain occupies 1 to 159; sequence MQFIDQAQIE…KLLRLELKLL (159 aa). Residues 160-330 form the OBG-type G domain; the sequence is AEVGIIGLPN…MLQEVWGILD (171 aa). GTP is bound by residues 166–173, 191–195, 213–216, 280–283, and 311–313; these read GLPNAGKS, FTTLI, DIPG, NKID, and SAV. Mg(2+) is bound by residues Ser-173 and Thr-193.

This sequence belongs to the TRAFAC class OBG-HflX-like GTPase superfamily. OBG GTPase family. Monomer. Requires Mg(2+) as cofactor.

It localises to the cytoplasm. An essential GTPase which binds GTP, GDP and possibly (p)ppGpp with moderate affinity, with high nucleotide exchange rates and a fairly low GTP hydrolysis rate. Plays a role in control of the cell cycle, stress response, ribosome biogenesis and in those bacteria that undergo differentiation, in morphogenesis control. This chain is GTPase Obg, found in Trichormus variabilis (strain ATCC 29413 / PCC 7937) (Anabaena variabilis).